The chain runs to 430 residues: 3-phosphoshikimate 1-carboxyvinyltransferase (430 aa).

3 residues coordinate 3-phosphoshikimate: K20, S21, and R25. Residue K20 participates in phosphoenolpyruvate binding. The phosphoenolpyruvate site is built by G92 and R120. 3-phosphoshikimate contacts are provided by S166, Q168, D312, and K339. Residue Q168 coordinates phosphoenolpyruvate. Catalysis depends on D312, which acts as the Proton acceptor. Residues R343 and R387 each contribute to the phosphoenolpyruvate site.

The protein belongs to the EPSP synthase family. Monomer.

It localises to the cytoplasm. The enzyme catalyses 3-phosphoshikimate + phosphoenolpyruvate = 5-O-(1-carboxyvinyl)-3-phosphoshikimate + phosphate. It participates in metabolic intermediate biosynthesis; chorismate biosynthesis; chorismate from D-erythrose 4-phosphate and phosphoenolpyruvate: step 6/7. In terms of biological role, catalyzes the transfer of the enolpyruvyl moiety of phosphoenolpyruvate (PEP) to the 5-hydroxyl of shikimate-3-phosphate (S3P) to produce enolpyruvyl shikimate-3-phosphate and inorganic phosphate. This chain is 3-phosphoshikimate 1-carboxyvinyltransferase, found in Lactococcus lactis subsp. cremoris (strain MG1363).